We begin with the raw amino-acid sequence, 347 residues long: MDENRKKALGAALGQIERQFGKGAVMRMGDARAVRGDVEVISTGSLQLDIALGVGGLPKGRVVEIYGPESSGKTTLTLHAIAEAQKAGGTAAFVDAEHALDPDYAEKLGVNLDDLLVSQPDTGEQALEITDMLVRSGAVDVVVVDSVAALTPKAEIEGEMGDSHVGLQARLMSQALRKLTANIKRSNTLVIFINQIRMKIGVMFGSPETTTGGNALKFYSSVRMDIRRLGAIKKGDEVLGNETRVKVVKNKMAPPFKQAEFEILYGQGISHEGELIDLGVKEGLIEKAGAWYSHNGDRIGQGKDNVRNYLKEHPELAAELEKQIRDKLLPGRAPSSEAQGTESGQEA.

Residue 67–74 (GPESSGKT) participates in ATP binding. The tract at residues 326–347 (DKLLPGRAPSSEAQGTESGQEA) is disordered. Positions 336 to 347 (SEAQGTESGQEA) are enriched in polar residues.

The protein belongs to the RecA family.

Its subcellular location is the cytoplasm. In terms of biological role, can catalyze the hydrolysis of ATP in the presence of single-stranded DNA, the ATP-dependent uptake of single-stranded DNA by duplex DNA, and the ATP-dependent hybridization of homologous single-stranded DNAs. It interacts with LexA causing its activation and leading to its autocatalytic cleavage. The polypeptide is Protein RecA (Alkalilimnicola ehrlichii (strain ATCC BAA-1101 / DSM 17681 / MLHE-1)).